The primary structure comprises 46 residues: Defensin-like protein 2 (46 aa).

4 disulfides stabilise this stretch: C3–C46, C13–C33, C19–C40, and C23–C42.

In terms of assembly, monomer. Present in seeds, cotyledons and leaves. Not found in roots or stems.

Functionally, has antibacterial activity against the Gram-positive bacterium S.aureus and the Gram-negative bacteria E.coli and P.syringae. Does not have antibacterial activity against the phytopathogenic bacteria R.solanacearum, Rhataybacter sp and Erwinia sp. Does not inhibit trypsin, chymotrypsin or alpha-amylases. This chain is Defensin-like protein 2, found in Vigna unguiculata (Cowpea).